Consider the following 325-residue polypeptide: Beta-ketoacyl-[acyl-carrier-protein] synthase III (325 aa).

Active-site residues include Cys-116 and His-252. Positions 253-257 (QANLR) are ACP-binding. The active site involves Asn-282.

The protein belongs to the thiolase-like superfamily. FabH family. In terms of assembly, homodimer.

The protein resides in the cytoplasm. The catalysed reaction is malonyl-[ACP] + acetyl-CoA + H(+) = 3-oxobutanoyl-[ACP] + CO2 + CoA. It functions in the pathway lipid metabolism; fatty acid biosynthesis. In terms of biological role, catalyzes the condensation reaction of fatty acid synthesis by the addition to an acyl acceptor of two carbons from malonyl-ACP. Catalyzes the first condensation reaction which initiates fatty acid synthesis and may therefore play a role in governing the total rate of fatty acid production. Possesses both acetoacetyl-ACP synthase and acetyl transacylase activities. Its substrate specificity determines the biosynthesis of branched-chain and/or straight-chain of fatty acids. This is Beta-ketoacyl-[acyl-carrier-protein] synthase III from Xanthomonas oryzae pv. oryzae (strain MAFF 311018).